The following is a 75-amino-acid chain: Mitochondrial import receptor subunit TOM7-1 (75 aa).

Position 1 is an N-acetylmethionine (Met-1). The segment at 1–28 (MESTISLKVNKGKGKGSKGASSSDDKSK) is disordered. At 1–46 (MESTISLKVNKGKGKGSKGASSSDDKSKFDVVKEWTNWSLKKAKVV) the chain is on the cytoplasmic side. The chain crosses the membrane as a helical span at residues 47–64 (THYGFIPLVIFVGMNSDP). The Mitochondrial intermembrane portion of the chain corresponds to 65 to 75 (KPHLFQLLSPV).

Belongs to the Tom7 family. Forms part of the preprotein translocase complex of the outer mitochondrial membrane (TOM complex) which consists of at least 6 different proteins (TOM5, TOM6, TOM7, TOM20, TOM22/TOM9 and TOM40). As to expression, expressed in roots, flowers, young cotyledons and leaves.

It localises to the mitochondrion outer membrane. Seems to act as a modulator of the dynamics of the mitochondrial protein transport machinery. Seems to promote the dissociation of subunits of the outer membrane translocase. This chain is Mitochondrial import receptor subunit TOM7-1 (TOM7-1), found in Arabidopsis thaliana (Mouse-ear cress).